The primary structure comprises 125 residues: Phosphoribosyl-AMP cyclohydrolase (125 aa).

D74 is a Mg(2+) binding site. Position 75 (C75) interacts with Zn(2+). The Mg(2+) site is built by D76 and D78. Zn(2+) is bound by residues C92 and C99.

The protein belongs to the PRA-CH family. As to quaternary structure, homodimer. Mg(2+) serves as cofactor. The cofactor is Zn(2+).

The protein resides in the cytoplasm. It catalyses the reaction 1-(5-phospho-beta-D-ribosyl)-5'-AMP + H2O = 1-(5-phospho-beta-D-ribosyl)-5-[(5-phospho-beta-D-ribosylamino)methylideneamino]imidazole-4-carboxamide. The protein operates within amino-acid biosynthesis; L-histidine biosynthesis; L-histidine from 5-phospho-alpha-D-ribose 1-diphosphate: step 3/9. Catalyzes the hydrolysis of the adenine ring of phosphoribosyl-AMP. The polypeptide is Phosphoribosyl-AMP cyclohydrolase (Desulforapulum autotrophicum (strain ATCC 43914 / DSM 3382 / VKM B-1955 / HRM2) (Desulfobacterium autotrophicum)).